The chain runs to 273 residues: 2,3,4,5-tetrahydropyridine-2,6-dicarboxylate N-succinyltransferase (273 aa).

Substrate-binding residues include Arg104 and Asp141.

This sequence belongs to the transferase hexapeptide repeat family. In terms of assembly, homotrimer.

Its subcellular location is the cytoplasm. It carries out the reaction (S)-2,3,4,5-tetrahydrodipicolinate + succinyl-CoA + H2O = (S)-2-succinylamino-6-oxoheptanedioate + CoA. The protein operates within amino-acid biosynthesis; L-lysine biosynthesis via DAP pathway; LL-2,6-diaminopimelate from (S)-tetrahydrodipicolinate (succinylase route): step 1/3. The chain is 2,3,4,5-tetrahydropyridine-2,6-dicarboxylate N-succinyltransferase from Neisseria meningitidis serogroup A / serotype 4A (strain DSM 15465 / Z2491).